Here is a 200-residue protein sequence, read N- to C-terminus: LHFPL tetraspan subfamily member 6 protein (200 aa).

A signal peptide spans 1-23; it reads MASSLTCTGVIWALLSFLSAATS. 3 helical membrane-spanning segments follow: residues 84-104, 123-143, and 166-186; these read ICTI…LTAL, GIQF…PLGW, and IGWA…LCTW.

Belongs to the LHFP family.

The protein resides in the membrane. The chain is LHFPL tetraspan subfamily member 6 protein from Rattus norvegicus (Rat).